The chain runs to 879 residues: Band 4.1-like protein 1 (879 aa).

Residues 1–88 (MTTETGPDSE…TPSKAQKSPQ (88 aa)) are disordered. The span at 17–35 (ETPQQPEAAAAVTTPVTPA) shows a compositional bias: low complexity. At T30 the chain carries Phosphothreonine. Positions 38–50 (SHPETNSNEKHLT) are enriched in basic and acidic residues. S75 bears the Phosphoserine mark. Residues 76–87 (ERTTPSKAQKSP) are compositionally biased toward polar residues. T79 carries the phosphothreonine modification. Residues 97-378 (AICRVTLLDA…EHHTFFRLVS (282 aa)) form the FERM domain. Y343 is subject to Phosphotyrosine. Phosphoserine occurs at positions 378, 430, 437, 461, and 466. The hydrophilic stretch occupies residues 381 to 482 (PPPKGFLVMG…VRTPTKIKEL (102 aa)). Positions 428 to 501 (SRSLDGAEFS…HKQEFLDKPE (74 aa)) are disordered. Residues 444 to 501 (ENHDAGPEGDKREDDAESGGRRSEAEEGEVRTPTKIKELKPEQETTPRHKQEFLDKPE) are compositionally biased toward basic and acidic residues. T475 is subject to Phosphothreonine. The interval 483–541 (KPEQETTPRHKQEFLDKPEDVLLKHQASINELKRTLKEPNSKLIHRDRDWDRERRLPSS) is spectrin--actin-binding. S510 is modified (phosphoserine). Residues 514 to 538 (LKRTLKEPNSKLIHRDRDWDRERRL) are compositionally biased toward basic and acidic residues. Residues 514–594 (LKRTLKEPNS…QDQERDAVFL (81 aa)) are disordered. Residues S540, S541, S544, and S546 each carry the phosphoserine modification. Residue T550 is modified to Phosphothreonine. The segment covering 550–577 (TPEKASERAGLREGSEEKVKPPRPRAPE) has biased composition (basic and acidic residues). Phosphoserine is present on residues S564, S578, S639, S648, S650, S665, S666, S671, S677, and S684. The tract at residues 657-696 (FAQDLKGPSSQEDESGGLEDSPDRGACSTPEMPQFESVKA) is disordered. Position 685 is a phosphothreonine (T685). Phosphoserine occurs at positions 721, 782, and 868. Residues 743–879 (PCITTETIST…EERDKKPQES (137 aa)) form a C-terminal (CTD) region.

Interacts with AGAP2. As to expression, highest expression in brain, also present in kidney, olfactory epithelium, retina, sensory ganglia, gastrointestinal tract (only enteric neurons) and lung.

The protein localises to the cytoplasm. It is found in the cytoskeleton. Its function is as follows. May function to confer stability and plasticity to neuronal membrane via multiple interactions, including the spectrin-actin-based cytoskeleton, integral membrane channels and membrane-associated guanylate kinases. The protein is Band 4.1-like protein 1 of Mus musculus (Mouse).